The sequence spans 290 residues: ATP synthase gamma chain (290 aa).

It belongs to the ATPase gamma chain family. In terms of assembly, F-type ATPases have 2 components, CF(1) - the catalytic core - and CF(0) - the membrane proton channel. CF(1) has five subunits: alpha(3), beta(3), gamma(1), delta(1), epsilon(1). CF(0) has three main subunits: a, b and c.

It localises to the cell inner membrane. Produces ATP from ADP in the presence of a proton gradient across the membrane. The gamma chain is believed to be important in regulating ATPase activity and the flow of protons through the CF(0) complex. The protein is ATP synthase gamma chain of Bacteroides fragilis (strain YCH46).